A 154-amino-acid chain; its full sequence is MGLSDGEWQLVLNIWGKVETDLAGHGQEVLIRLFKNHPETLDKFDKFKHLKTEDEMKGSEDLKKHGNTVLTALGGILKKKGHHEAELKPLAQSHATKHKIPVKYLEFISDAIIQVLQSKHSGDFHADTEAAMKKALELFRNDIAAKYKELGFQG.

The Globin domain occupies 2–148; the sequence is GLSDGEWQLV…FRNDIAAKYK (147 aa). Phosphoserine is present on S4. H65 is a nitrite binding site. H65 is an O2 binding site. T68 carries the phosphothreonine modification. H94 is a binding site for heme b.

Belongs to the globin family. Monomeric.

It localises to the cytoplasm. Its subcellular location is the sarcoplasm. It catalyses the reaction Fe(III)-heme b-[protein] + nitric oxide + H2O = Fe(II)-heme b-[protein] + nitrite + 2 H(+). The enzyme catalyses H2O2 + AH2 = A + 2 H2O. In terms of biological role, monomeric heme protein which primary function is to store oxygen and facilitate its diffusion within muscle tissues. Reversibly binds oxygen through a pentacoordinated heme iron and enables its timely and efficient release as needed during periods of heightened demand. Depending on the oxidative conditions of tissues and cells, and in addition to its ability to bind oxygen, it also has a nitrite reductase activity whereby it regulates the production of bioactive nitric oxide. Under stress conditions, like hypoxia and anoxia, it also protects cells against reactive oxygen species thanks to its pseudoperoxidase activity. This is Myoglobin (MB) from Vulpes chama (Cape fox).